A 35-amino-acid chain; its full sequence is Cecropin (35 aa).

Ile-35 bears the Isoleucine amide mark.

Belongs to the cecropin family.

The protein resides in the secreted. Its function is as follows. Cecropins have lytic and antibacterial activity against several Gram-positive and Gram-negative bacteria. The sequence is that of Cecropin from Bombyx mori (Silk moth).